A 130-amino-acid chain; its full sequence is uncharacterized protein (130 aa).

The residue at position 1 (Met-1) is an N-acetylmethionine.

In terms of assembly, homotetramer.

This is an uncharacterized protein from Arabidopsis thaliana (Mouse-ear cress).